Consider the following 59-residue polypeptide: Putative potassium channel toxin Ts22 (59 aa).

The first 22 residues, 1-22 (MKAFYGILIIFILISMIDLSQQ), serve as a signal peptide directing secretion. 3 cysteine pairs are disulfide-bonded: Cys29–Cys50, Cys35–Cys55, and Cys39–Cys57.

The protein belongs to the short scorpion toxin superfamily. Potassium channel inhibitor family. Alpha-KTx 04 subfamily. In terms of tissue distribution, expressed by the venom gland.

It is found in the secreted. In terms of biological role, potently blocks voltage-gated potassium channels (Kv). In Tityus serrulatus (Brazilian scorpion), this protein is Putative potassium channel toxin Ts22.